We begin with the raw amino-acid sequence, 502 residues long: ATP synthase subunit alpha (502 aa).

The tract at residues 115–135 is disordered; it reads VDGLGPINTTNTRPIESPAPG. 169-176 lines the ATP pocket; sequence GDRQTGKT.

The protein belongs to the ATPase alpha/beta chains family. F-type ATPases have 2 components, CF(1) - the catalytic core - and CF(0) - the membrane proton channel. CF(1) has five subunits: alpha(3), beta(3), gamma(1), delta(1), epsilon(1). CF(0) has three main subunits: a(1), b(2) and c(9-12). The alpha and beta chains form an alternating ring which encloses part of the gamma chain. CF(1) is attached to CF(0) by a central stalk formed by the gamma and epsilon chains, while a peripheral stalk is formed by the delta and b chains.

It is found in the cell membrane. It carries out the reaction ATP + H2O + 4 H(+)(in) = ADP + phosphate + 5 H(+)(out). Produces ATP from ADP in the presence of a proton gradient across the membrane. The alpha chain is a regulatory subunit. In Bacillus anthracis (strain A0248), this protein is ATP synthase subunit alpha.